Reading from the N-terminus, the 560-residue chain is Trans-activating transcriptional regulatory protein (560 aa).

2 disordered regions span residues 1-25 (MPKN…LFNN) and 99-134 (TGAE…LVNK).

This sequence belongs to the nucleopolyhedrovirus IE-1 protein family.

Regulatory transcriptional protein, which trans-activates gene expression from early baculovirus promoters. Can also trans-activate its own promoter, suggesting that it is autoregulated during normal infection of insect cells. This Orgyia pseudotsugata (Douglas-fir tussock moth) protein is Trans-activating transcriptional regulatory protein (IE1).